Here is a 20-residue protein sequence, read N- to C-terminus: Brevinin-1SPb (20 aa).

C14 and C20 are oxidised to a cystine.

Expressed by the skin glands.

It localises to the secreted. In terms of biological role, antimicrobial peptide with activity against Gram-negative and Gram-positive bacteria (MIC=50 uM against E.coli, MIC=6 uM against S.aureus) and fungi (MIC=13 uM against C.albicans). Shows hemolytic activity on human erythrocytes (HC(50)=25 uM). This chain is Brevinin-1SPb, found in Lithobates septentrionalis (Mink frog).